The chain runs to 437 residues: Xylose isomerase (437 aa).

Active-site residues include His101 and Asp104. The Mg(2+) site is built by Glu232, Glu268, His271, Asp296, Asp307, Asp309, and Asp339.

Belongs to the xylose isomerase family. In terms of assembly, homotetramer. Requires Mg(2+) as cofactor.

It is found in the cytoplasm. The enzyme catalyses alpha-D-xylose = alpha-D-xylulofuranose. This is Xylose isomerase from Actinobacillus succinogenes (strain ATCC 55618 / DSM 22257 / CCUG 43843 / 130Z).